A 419-amino-acid polypeptide reads, in one-letter code: Copalyl diphosphate synthase 2, chloroplastic (419 aa).

Lysine 82 contributes to the substrate binding site.

This sequence belongs to the terpene synthase family. Tpsc subfamily. It depends on Mg(2+) as a cofactor. As to expression, ubiquitous expression in roots, stems, leaves and flowers.

Its subcellular location is the plastid. The protein resides in the chloroplast. It carries out the reaction (2E,6E,10E)-geranylgeranyl diphosphate = (+)-copalyl diphosphate. The protein operates within secondary metabolite biosynthesis; terpenoid biosynthesis. Its function is as follows. Involved in the biosynthesis of ent-kaurene diterpenoids natural products such as oridonin, miltiradiene, eriocalyxin B and nezukol, known to exhibit antitumor, anti-inflammatory and antibacterial activities. Catalyzes the conversion of (2E,6E,10E)-geranylgeranyl diphosphate (GGPP) to (+)-copalyl diphosphate ((+)-CPP). The chain is Copalyl diphosphate synthase 2, chloroplastic from Isodon rubescens (Rabdosia rubescens).